Consider the following 463-residue polypeptide: Histone acetyltransferase mst1 (463 aa).

The region spanning 22-74 (VYKSKVFAFKDGEYRKAEILMIQKRTRGVVYYVHYNDYNKRLDEWITIDNIDL) is the Tudor-knot domain. The tract at residues 76-145 (KGIEYPPPEK…GSNAGNESLP (70 aa)) is disordered. Basic residues predominate over residues 87–99 (KKAHGKGKSSKRP). A compositionally biased stretch (low complexity) spans 111 to 121 (PSKTEPSTPST). One can recognise an MYST-type HAT domain in the interval 179 to 451 (ARIRNINKIC…NGDLLADWQP (273 aa)). The segment at 212-237 (VYICSFCFCYYGSERQFQRHREKCTL) adopts a C2HC MYST-type zinc-finger fold. The ESA1-RPD3 motif signature appears at 262 to 283 (RTWCRNICLLSKLFLDHKMLYY). N6-acetyllysine; by autocatalysis is present on Lys279. Acetyl-CoA is bound by residues 320–324 (ACILT) and 329–335 (QRHGYGK). The active-site Proton donor/acceptor is Glu355. An acetyl-CoA-binding site is contributed by Ser359.

Belongs to the MYST (SAS/MOZ) family. Component of the NuA4 histone acetyltransferase complex. Interacts with arp4. In terms of processing, autoacetylation at Lys-279 is required for proper function.

It localises to the nucleus. It is found in the chromosome. It catalyses the reaction L-lysyl-[histone] + acetyl-CoA = N(6)-acetyl-L-lysyl-[histone] + CoA + H(+). The catalysed reaction is L-lysyl-[protein] + acetyl-CoA = N(6)-acetyl-L-lysyl-[protein] + CoA + H(+). It carries out the reaction 2-hydroxyisobutanoyl-CoA + L-lysyl-[protein] = N(6)-(2-hydroxyisobutanoyl)-L-lysyl-[protein] + CoA + H(+). The enzyme catalyses (2E)-butenoyl-CoA + L-lysyl-[protein] = N(6)-(2E)-butenoyl-L-lysyl-[protein] + CoA + H(+). Catalytic component of the NuA4 histone acetyltransferase (HAT) complex which is involved in epigenetic transcriptional activation of selected genes principally by acetylation of nucleosomal histones H4, H3, H2B, H2A and H2A variant H2A.Z. Acetylates histone H4 to form H4K5ac, H4K8ac, H4K12ac and H4K16ac, histone H3 to form H3K14ac, and histone H2A to form H2AK4ac and H2AK7ac. The NuA4 complex is involved in the DNA damage response and is required for chromosome segregation. The NuA4 complex plays a direct role in repair of DNA double-strand breaks (DSBs) through homologous recombination. Recruitment to promoters depends on H3K4me. Also acetylates non-histone proteins. In addition to protein acetyltransferase, can use different acyl-CoA substrates, such as 2-hydroxyisobutanoyl-CoA (2-hydroxyisobutyryl-CoA) or (2E)-butenoyl-CoA (crotonyl-CoA), and is able to mediate protein 2-hydroxyisobutyrylation and crotonylation, respectively. The polypeptide is Histone acetyltransferase mst1 (Schizosaccharomyces pombe (strain 972 / ATCC 24843) (Fission yeast)).